The chain runs to 392 residues: Formate-dependent phosphoribosylglycinamide formyltransferase (392 aa).

N(1)-(5-phospho-beta-D-ribosyl)glycinamide-binding positions include 22–23 (EL) and Glu82. Residues Arg114, Lys155, 160-165 (SSGKGQ), 195-198 (EGEV), and Glu203 contribute to the ATP site. The ATP-grasp domain maps to 119 to 308 (RLAAETLALP…EFALHVRAFL (190 aa)). Residues Glu267 and Glu279 each coordinate Mg(2+). Residues Asp286, Lys355, and 362–363 (RR) each bind N(1)-(5-phospho-beta-D-ribosyl)glycinamide.

This sequence belongs to the PurK/PurT family. Homodimer.

It carries out the reaction N(1)-(5-phospho-beta-D-ribosyl)glycinamide + formate + ATP = N(2)-formyl-N(1)-(5-phospho-beta-D-ribosyl)glycinamide + ADP + phosphate + H(+). Its pathway is purine metabolism; IMP biosynthesis via de novo pathway; N(2)-formyl-N(1)-(5-phospho-D-ribosyl)glycinamide from N(1)-(5-phospho-D-ribosyl)glycinamide (formate route): step 1/1. Its function is as follows. Involved in the de novo purine biosynthesis. Catalyzes the transfer of formate to 5-phospho-ribosyl-glycinamide (GAR), producing 5-phospho-ribosyl-N-formylglycinamide (FGAR). Formate is provided by PurU via hydrolysis of 10-formyl-tetrahydrofolate. The sequence is that of Formate-dependent phosphoribosylglycinamide formyltransferase from Edwardsiella ictaluri (strain 93-146).